The primary structure comprises 635 residues: Paraneoplastic antigen-like protein 8B (635 aa).

3 disordered regions span residues 115 to 202 (PTQA…DESL), 260 to 332 (TDKS…NPEF), and 492 to 635 (AARE…PKCR). Polar residues predominate over residues 133-147 (SETQAQDSGEVTGQA). Residues 156 to 183 (NPRRGRRGRRNRTRRNRLTQKGKKRSRG) are compositionally biased toward basic residues. The segment covering 261-273 (DKSKKEEAEKEPA) has biased composition (basic and acidic residues). 2 stretches are compositionally biased toward acidic residues: residues 302–329 (PDEEPVDSDTSESDSQESGDQETEELDN) and 502–524 (GSEEASDEQSEEESEDTESEASE). Residues 531–540 (RKPRAKRART) show a composition bias toward basic residues. Low complexity predominate over residues 541–557 (APRGLTPAGAPPTASGA). Composition is skewed to basic residues over residues 558-568 (RKTRAGGRGRG) and 619-635 (ARGKKARRGRRLPPKCR).

Belongs to the PNMA family.

This Homo sapiens (Human) protein is Paraneoplastic antigen-like protein 8B.